A 298-amino-acid polypeptide reads, in one-letter code: 4-hydroxy-tetrahydrodipicolinate synthase (298 aa).

Thr-45 contacts pyruvate. Catalysis depends on Tyr-133, which acts as the Proton donor/acceptor. The active-site Schiff-base intermediate with substrate is Lys-161. Residue Ile-203 coordinates pyruvate.

The protein belongs to the DapA family. As to quaternary structure, homotetramer; dimer of dimers.

The protein resides in the cytoplasm. It catalyses the reaction L-aspartate 4-semialdehyde + pyruvate = (2S,4S)-4-hydroxy-2,3,4,5-tetrahydrodipicolinate + H2O + H(+). The protein operates within amino-acid biosynthesis; L-lysine biosynthesis via DAP pathway; (S)-tetrahydrodipicolinate from L-aspartate: step 3/4. In terms of biological role, catalyzes the condensation of (S)-aspartate-beta-semialdehyde [(S)-ASA] and pyruvate to 4-hydroxy-tetrahydrodipicolinate (HTPA). This Wigglesworthia glossinidia brevipalpis protein is 4-hydroxy-tetrahydrodipicolinate synthase.